Consider the following 214-residue polypeptide: High frequency lysogenization protein HflD homolog (214 aa).

Belongs to the HflD family.

It is found in the cytoplasm. The protein resides in the cell inner membrane. This Chromohalobacter salexigens (strain ATCC BAA-138 / DSM 3043 / CIP 106854 / NCIMB 13768 / 1H11) protein is High frequency lysogenization protein HflD homolog.